Reading from the N-terminus, the 392-residue chain is INCREASED PETAL GROWTH ANISOTROPY 1-like protein 1 (392 aa).

Positions 11-52 (LLRLVKELQAYLVRNDKLEKENHELRQEVARLRAQVSNLKSH) form a coiled coil. Polar residues-rich tracts occupy residues 65–76 (QSSYDGSNTDGS) and 100–109 (PTIQGQSTAT). Residues 65–128 (QSSYDGSNTD…SKRTLGKRSV (64 aa)) form a disordered region. Positions 269–299 (KDSLTQALQRIQSLQDRLEESVNNTEKMRDS) form a coiled coil.

Belongs to the IPGA1 family.

It localises to the cytoplasm. The protein localises to the cytoskeleton. Its function is as follows. Microtubule-associated protein probably involved in the regulation of microtubule organization. The polypeptide is INCREASED PETAL GROWTH ANISOTROPY 1-like protein 1 (Arabidopsis thaliana (Mouse-ear cress)).